We begin with the raw amino-acid sequence, 176 residues long: MTLDALLQSLPPYAKDVRLNFSSLGREETLTAQQRDGLLVACGLASRNPDLARALEAEAAPRLSPAALAAAKAAATVMAMNNVYYRFTHLASNPAYATRPAKLRMSSIGNPGVARADFELWSLAVSAINGCGRCIDAHEQVLREAGVGEEAIQAAVRVAAVVASLAVALESVRAAA.

Cys-131 serves as the catalytic Proton donor. Cys-131 and Cys-134 are joined by a disulfide. The Cysteine sulfenic acid (-SOH) intermediate role is filled by Cys-134.

It belongs to the AhpD family.

The catalysed reaction is N(6)-[(R)-dihydrolipoyl]-L-lysyl-[lipoyl-carrier protein] + a hydroperoxide = N(6)-[(R)-lipoyl]-L-lysyl-[lipoyl-carrier protein] + an alcohol + H2O. Antioxidant protein with alkyl hydroperoxidase activity. Required for the reduction of the AhpC active site cysteine residues and for the regeneration of the AhpC enzyme activity. In Methylobacterium sp. (strain 4-46), this protein is Alkyl hydroperoxide reductase AhpD.